The chain runs to 164 residues: CASP-like protein 1C2 (164 aa).

Topologically, residues 1-8 (MVKLTQRL) are cytoplasmic. A helical transmembrane segment spans residues 9 to 29 (GGLVLRFAAFCAALGAVIAMI). Residues 30 to 51 (TSRERSSFFVISLVAKYSDLAA) lie on the Extracellular side of the membrane. A helical membrane pass occupies residues 52 to 72 (FKYFVIANAIVTVYSFLVLFL). Over 73–80 (PKESLLWK) the chain is Cytoplasmic. Residues 81–101 (FVVVLDLMVTMLLTSSLSAAV) form a helical membrane-spanning segment. Residues 102-129 (AVAQVGKRGNANAGWLPICGQVPRFCDQ) lie on the Extracellular side of the membrane. The chain crosses the membrane as a helical span at residues 130–150 (ITGALIAGLVALVLYVFLLIF). At 151–164 (SIHHVVDPFLLRKS) the chain is on the cytoplasmic side.

The protein belongs to the Casparian strip membrane proteins (CASP) family. In terms of assembly, homodimer and heterodimers.

Its subcellular location is the cell membrane. This Arabidopsis thaliana (Mouse-ear cress) protein is CASP-like protein 1C2.